We begin with the raw amino-acid sequence, 52 residues long: Ornatin-B (52 aa).

The Cell attachment site signature appears at 42–44 (RGD).

This sequence belongs to the ornatin family.

Its subcellular location is the secreted. Its function is as follows. Potent inhibitor of fibrinogen interaction with platelet receptors expressed on glycoprotein IIb-IIIa complex. May prevent blood from clotting during either feeding and/or storage of ingested blood. This is Ornatin-B from Placobdella ornata (Turtle leech).